The sequence spans 153 residues: Ribosomal RNA large subunit methyltransferase H (153 aa).

S-adenosyl-L-methionine-binding positions include Leu70, Gly102, and Phe121–Phe126.

This sequence belongs to the RNA methyltransferase RlmH family. Homodimer.

The protein localises to the cytoplasm. It catalyses the reaction pseudouridine(1915) in 23S rRNA + S-adenosyl-L-methionine = N(3)-methylpseudouridine(1915) in 23S rRNA + S-adenosyl-L-homocysteine + H(+). Specifically methylates the pseudouridine at position 1915 (m3Psi1915) in 23S rRNA. This chain is Ribosomal RNA large subunit methyltransferase H, found in Desulfotalea psychrophila (strain LSv54 / DSM 12343).